The following is a 155-amino-acid chain: Protein-export protein SecB (155 aa).

This sequence belongs to the SecB family. In terms of assembly, homotetramer, a dimer of dimers. One homotetramer interacts with 1 SecA dimer.

The protein localises to the cytoplasm. In terms of biological role, one of the proteins required for the normal export of preproteins out of the cell cytoplasm. It is a molecular chaperone that binds to a subset of precursor proteins, maintaining them in a translocation-competent state. It also specifically binds to its receptor SecA. The chain is Protein-export protein SecB from Escherichia coli O127:H6 (strain E2348/69 / EPEC).